A 237-amino-acid polypeptide reads, in one-letter code: Protein-S-isoprenylcysteine O-methyltransferase (237 aa).

4 helical membrane-spanning segments follow: residues 26–46 (SSAISCGLGIGIGFGIALFIF), 53–73 (FGIYLAGLCTFHMWEYIWVTM), 92–112 (FNMALLISFIEFWIEWYFFPS), and 116–136 (FSLWWVGAICMVFGQIVRSVA). S-adenosyl-L-methionine is bound by residues Q149, 156–159 (HVLV), Y164, and 169–172 (HPSY). The helical transmembrane segment at 184 to 204 (VILMNPISIIGFGWASWSFFS) threads the bilayer. R206 serves as a coordination point for substrate. E210 contributes to the S-adenosyl-L-methionine binding site.

This sequence belongs to the class VI-like SAM-binding methyltransferase superfamily. Isoprenylcysteine carboxyl methyltransferase family.

Its subcellular location is the endoplasmic reticulum membrane. The enzyme catalyses [protein]-C-terminal S-[(2E,6E)-farnesyl]-L-cysteine + S-adenosyl-L-methionine = [protein]-C-terminal S-[(2E,6E)-farnesyl]-L-cysteine methyl ester + S-adenosyl-L-homocysteine. Methylates the C-terminal cysteine residues of small GTPases and the heterotrimeric G protein gamma subunit in response to cAMP. The methylation is required for intercellular signaling and regulation of cAMP waves propagation. It also seems to induce the activity of car1, a G protein-coupled receptor which senses extracellular cAMP during the aggregation phase of development. The protein is Protein-S-isoprenylcysteine O-methyltransferase (icmt-1) of Dictyostelium discoideum (Social amoeba).